The following is a 177-amino-acid chain: Large ribosomal subunit protein uL6 (177 aa).

This sequence belongs to the universal ribosomal protein uL6 family. In terms of assembly, part of the 50S ribosomal subunit.

Functionally, this protein binds to the 23S rRNA, and is important in its secondary structure. It is located near the subunit interface in the base of the L7/L12 stalk, and near the tRNA binding site of the peptidyltransferase center. This is Large ribosomal subunit protein uL6 from Klebsiella pneumoniae (strain 342).